The following is a 511-amino-acid chain: Ribonuclease Y (511 aa).

A helical transmembrane segment spans residues 3–23 (VTIVASIACFIVGGILSYVLF). One can recognise a KH domain in the interval 201-261 (SVTVFHIESD…VRREIARLAL (61 aa)). An HD domain is found at 327–420 (LLQHARETAN…VQVCDAISGA (94 aa)).

The protein belongs to the RNase Y family.

The protein localises to the cell membrane. Functionally, endoribonuclease that initiates mRNA decay. The sequence is that of Ribonuclease Y from Bacteroides fragilis (strain ATCC 25285 / DSM 2151 / CCUG 4856 / JCM 11019 / LMG 10263 / NCTC 9343 / Onslow / VPI 2553 / EN-2).